A 110-amino-acid chain; its full sequence is uncharacterized protein (110 aa).

Helical transmembrane passes span 6–26 (VSLY…IYNV) and 38–58 (TSGP…IIGP).

It localises to the membrane. This is an uncharacterized protein from Saccharomyces cerevisiae (strain ATCC 204508 / S288c) (Baker's yeast).